Reading from the N-terminus, the 438-residue chain is GTPase Der (438 aa).

EngA-type G domains lie at 4–168 (PIVA…PAVP) and 176–351 (LKVA…EAAN). GTP is bound by residues 10-17 (GRPNVGKS), 57-61 (DTGGI), 120-123 (NKVE), 182-189 (GRPNVGKS), 229-233 (DTAGM), and 294-297 (NKWD). Residues 352–436 (RRVATGTLNA…PIRLIFRRGR (85 aa)) form the KH-like domain.

It belongs to the TRAFAC class TrmE-Era-EngA-EngB-Septin-like GTPase superfamily. EngA (Der) GTPase family. Associates with the 50S ribosomal subunit.

In terms of biological role, GTPase that plays an essential role in the late steps of ribosome biogenesis. This chain is GTPase Der, found in Moorella thermoacetica (strain ATCC 39073 / JCM 9320).